The following is a 148-amino-acid chain: uncharacterized protein (148 aa).

2 disordered regions span residues 1–86 and 122–148; these read MCPP…VQSP and RAHR…TSPC. Over residues 38–57 the composition is skewed to basic residues; the sequence is RPPKMQRRPRPPVAKRRRFP. Over residues 134-148 the composition is skewed to polar residues; the sequence is QSRQRPSPDSQTSPC.

This sequence belongs to the Epstein-Barr virus BLLF2 family.

This is an uncharacterized protein from Homo sapiens (Human).